We begin with the raw amino-acid sequence, 352 residues long: Uroporphyrinogen decarboxylase (352 aa).

Residues 26–30 (RQAGR), Phe45, Asp76, Tyr153, Ser208, and His323 each bind substrate.

The protein belongs to the uroporphyrinogen decarboxylase family. In terms of assembly, homodimer.

The protein localises to the cytoplasm. The catalysed reaction is uroporphyrinogen III + 4 H(+) = coproporphyrinogen III + 4 CO2. The protein operates within porphyrin-containing compound metabolism; protoporphyrin-IX biosynthesis; coproporphyrinogen-III from 5-aminolevulinate: step 4/4. Catalyzes the decarboxylation of four acetate groups of uroporphyrinogen-III to yield coproporphyrinogen-III. The sequence is that of Uroporphyrinogen decarboxylase from Parasynechococcus marenigrum (strain WH8102).